We begin with the raw amino-acid sequence, 333 residues long: tRNA dimethylallyltransferase (333 aa).

An ATP-binding site is contributed by 23 to 30; it reads GPTGAGKT. 25–30 serves as a coordination point for substrate; sequence TGAGKT. 2 interaction with substrate tRNA regions span residues 53-56 and 177-181; these read DSAL and QRVQR.

It belongs to the IPP transferase family. Monomer. Requires Mg(2+) as cofactor.

The catalysed reaction is adenosine(37) in tRNA + dimethylallyl diphosphate = N(6)-dimethylallyladenosine(37) in tRNA + diphosphate. Functionally, catalyzes the transfer of a dimethylallyl group onto the adenine at position 37 in tRNAs that read codons beginning with uridine, leading to the formation of N6-(dimethylallyl)adenosine (i(6)A). The protein is tRNA dimethylallyltransferase of Polynucleobacter asymbioticus (strain DSM 18221 / CIP 109841 / QLW-P1DMWA-1) (Polynucleobacter necessarius subsp. asymbioticus).